The sequence spans 330 residues: Pantothenate kinase (330 aa).

Residue 108-115 (GSVAVGKS) coordinates ATP.

This sequence belongs to the prokaryotic pantothenate kinase family.

The protein localises to the cytoplasm. The catalysed reaction is (R)-pantothenate + ATP = (R)-4'-phosphopantothenate + ADP + H(+). Its pathway is cofactor biosynthesis; coenzyme A biosynthesis; CoA from (R)-pantothenate: step 1/5. This is Pantothenate kinase from Allorhizobium ampelinum (strain ATCC BAA-846 / DSM 112012 / S4) (Agrobacterium vitis (strain S4)).